A 276-amino-acid polypeptide reads, in one-letter code: Expansin-like A3 (276 aa).

The first 28 residues, 1–28 (MAVLLSILSSSFLLLLAASSSSTPRASA), serve as a signal peptide directing secretion. Residues 52 to 158 (GGGCGYGAMA…RRIPCDYKDK (107 aa)) enclose the Expansin-like EG45 domain. 2 N-linked (GlcNAc...) asparagine glycosylation sites follow: Asn115 and Asn159. Residues 172–255 (NNLVIKFLYQ…NWQPGQVYDT (84 aa)) form the Expansin-like CBD domain.

The protein belongs to the expansin family. Expansin-like A subfamily.

It localises to the secreted. This chain is Expansin-like A3 (EXLA3), found in Oryza sativa subsp. japonica (Rice).